The following is a 147-amino-acid chain: Large ribosomal subunit protein uL16 (147 aa).

The protein belongs to the universal ribosomal protein uL16 family. As to quaternary structure, part of the 50S ribosomal subunit.

In terms of biological role, binds 23S rRNA and is also seen to make contacts with the A and possibly P site tRNAs. The chain is Large ribosomal subunit protein uL16 from Clostridium tetani (strain Massachusetts / E88).